The sequence spans 358 residues: MAEPSLVSGGEEPEERVIEAALRPKNLHDFVGQHRVRKQLALVLEASKMRGRSADHVLMSGPPGLGKTTLAMIIAAEMNAPLRISSGPAIQHAGDLAAILSSLSEGEVLFLDEIHRMSRPAEEMLYMAMEDFRVDIVVGKGAGATAIPLELPPFTLVGATTRAGLLPGPLRDRFGFTGHLEFYSVAELELVLRRSAGLLDLKVNSAGFTEIAGRSRGTPRIANRLLRRVRDWALVHGIEQIDARSASAALDMYEVDERGLDRLDRSVLEALITKFNGGPVGLSTLAIAVGEEPETVETVAEPFLVREGLLGRTPRGRIAMASAWTHLGYAVPAGVFGQETLALYGEDENHAESVDTVG.

Positions 1–183 are large ATPase domain (RuvB-L); that stretch reads MAEPSLVSGG…FGFTGHLEFY (183 aa). Residues Leu-22, Arg-23, Gly-64, Lys-67, Thr-68, Thr-69, 130 to 132, Arg-173, Tyr-183, and Arg-220 contribute to the ATP site; that span reads EDF. Thr-68 contributes to the Mg(2+) binding site. A small ATPAse domain (RuvB-S) region spans residues 184 to 254; the sequence is SVAELELVLR…SASAALDMYE (71 aa). The segment at 257–358 is head domain (RuvB-H); it reads ERGLDRLDRS…NHAESVDTVG (102 aa). Arg-312 and Arg-317 together coordinate DNA.

This sequence belongs to the RuvB family. Homohexamer. Forms an RuvA(8)-RuvB(12)-Holliday junction (HJ) complex. HJ DNA is sandwiched between 2 RuvA tetramers; dsDNA enters through RuvA and exits via RuvB. An RuvB hexamer assembles on each DNA strand where it exits the tetramer. Each RuvB hexamer is contacted by two RuvA subunits (via domain III) on 2 adjacent RuvB subunits; this complex drives branch migration. In the full resolvosome a probable DNA-RuvA(4)-RuvB(12)-RuvC(2) complex forms which resolves the HJ.

The protein resides in the cytoplasm. The catalysed reaction is ATP + H2O = ADP + phosphate + H(+). The RuvA-RuvB-RuvC complex processes Holliday junction (HJ) DNA during genetic recombination and DNA repair, while the RuvA-RuvB complex plays an important role in the rescue of blocked DNA replication forks via replication fork reversal (RFR). RuvA specifically binds to HJ cruciform DNA, conferring on it an open structure. The RuvB hexamer acts as an ATP-dependent pump, pulling dsDNA into and through the RuvAB complex. RuvB forms 2 homohexamers on either side of HJ DNA bound by 1 or 2 RuvA tetramers; 4 subunits per hexamer contact DNA at a time. Coordinated motions by a converter formed by DNA-disengaged RuvB subunits stimulates ATP hydrolysis and nucleotide exchange. Immobilization of the converter enables RuvB to convert the ATP-contained energy into a lever motion, pulling 2 nucleotides of DNA out of the RuvA tetramer per ATP hydrolyzed, thus driving DNA branch migration. The RuvB motors rotate together with the DNA substrate, which together with the progressing nucleotide cycle form the mechanistic basis for DNA recombination by continuous HJ branch migration. Branch migration allows RuvC to scan DNA until it finds its consensus sequence, where it cleaves and resolves cruciform DNA. The sequence is that of Holliday junction branch migration complex subunit RuvB from Paenarthrobacter aurescens (strain TC1).